The chain runs to 469 residues: Pup--protein ligase (469 aa).

Glutamate 9 provides a ligand contact to Mg(2+). Arginine 53 contacts ATP. Tyrosine 55 is a Mg(2+) binding site. Catalysis depends on aspartate 57, which acts as the Proton acceptor. Residue glutamate 63 participates in Mg(2+) binding. ATP is bound by residues threonine 66 and tryptophan 430.

It belongs to the Pup ligase/Pup deamidase family. Pup-conjugating enzyme subfamily.

It carries out the reaction ATP + [prokaryotic ubiquitin-like protein]-L-glutamate + [protein]-L-lysine = ADP + phosphate + N(6)-([prokaryotic ubiquitin-like protein]-gamma-L-glutamyl)-[protein]-L-lysine.. It functions in the pathway protein degradation; proteasomal Pup-dependent pathway. It participates in protein modification; protein pupylation. Catalyzes the covalent attachment of the prokaryotic ubiquitin-like protein modifier Pup to the proteasomal substrate proteins, thereby targeting them for proteasomal degradation. This tagging system is termed pupylation. The ligation reaction involves the side-chain carboxylate of the C-terminal glutamate of Pup and the side-chain amino group of a substrate lysine. The protein is Pup--protein ligase of Kocuria rhizophila (strain ATCC 9341 / DSM 348 / NBRC 103217 / DC2201).